Here is a 263-residue protein sequence, read N- to C-terminus: MIREMSNHDIKLEVCVDSIRSAFAAEEGGASRIELCSALGEGGLTPSIGTLKTIKETLTMPIYCMLRPRRGTDFVYSDEEMCALLTDMDLLRENGADGFVFGSLNPDRSINVDQCRHVLLASGGLPVTFHRAFDLTDQKSMDENVDMLRELGFRRLLSSGFRPTAADGVDCLAQLIAKHQRDFIVMPGAGIKVSNLEEILTVSRCLEFHASALDTAGEDYVAPTTTRMECDVTMGKQDVDPYYGTNSIVVRKMVTIAKAMSSR.

It belongs to the CutC family.

Functionally, involved in copper homeostasis. The protein is Copper homeostasis protein cutC homolog of Drosophila melanogaster (Fruit fly).